A 109-amino-acid chain; its full sequence is U4-lycotoxin-Ls1d (109 aa).

The N-terminal stretch at methionine 1–alanine 22 is a signal peptide. A propeptide spanning residues methionine 23–arginine 44 is cleaved from the precursor. The knottin domain stretch occupies residues alanine 45 to cysteine 88. Disulfide bonds link cysteine 48–cysteine 63, cysteine 55–cysteine 72, cysteine 62–cysteine 88, and cysteine 74–cysteine 86. A linear cationic cytotoxin domain region spans residues glutamine 89–valine 108.

This sequence belongs to the neurotoxin 19 (CSTX) family. 05 (U4-Lctx) subfamily. In terms of tissue distribution, expressed by the venom gland.

The protein localises to the secreted. Enhances the high-affinity desensitization of human P2RX3 purinoceptors. This is U4-lycotoxin-Ls1d from Lycosa singoriensis (Wolf spider).